The primary structure comprises 119 residues: Beta-2-microglobulin (119 aa).

An N-terminal signal peptide occupies residues 1-20 (MARFVVVPLLVLVSLFGLEA). Residues 25–114 (PKIQVYSRYP…VTFSTPKTVK (90 aa)) form the Ig-like C1-type domain. Cysteines 45 and 100 form a disulfide.

Belongs to the beta-2-microglobulin family. In terms of assembly, heterodimer of an alpha chain and a beta chain. Beta-2-microglobulin is the beta-chain of major histocompatibility complex class I molecules.

It localises to the secreted. Component of the class I major histocompatibility complex (MHC). Involved in the presentation of peptide antigens to the immune system. The sequence is that of Beta-2-microglobulin (B2M) from Saguinus oedipus (Cotton-top tamarin).